A 452-amino-acid polypeptide reads, in one-letter code: MGKYFGTSGIRGRVGEFLTPELALRAGRALGEYLGGGTVAVGRDTRVHCDALRAAVISGLTAQGCDVVDIGVVCTPTLGCYVATEGLDAGVMITASHNPPEYNGIKFWDSDGMAFSPEQEREIEQIMDGDLEYPNWDEYGEVVDDETALNVHVERILDEVSVDGDGLRIVVDCANGPSAFVTPVVLREMGCEVISLNAHPDGHFPGREPEPKPENLKDLMRTVRATDADLGIAHDGDADRVVFVTEEGKFAGYDEVLALVCRRILEEKGPGKVAVNVDASMVIDEVVREMGGEVVRTKVGDVHVAAAIREEGCVFGGEPNGTWIHPDVHMCPDGPLSAAWMVSLLIEEGRPLSELLAEIPSYPVVRETVECPDELKPEVMRLVETRLREAYDDIDTVDGVRVELDDGWVLVRPSGTEPLIRITVEAESEERARELRDEFVDIVRRCVEEVRE.

Ser96 functions as the Phosphoserine intermediate in the catalytic mechanism. Residues Ser96, Asp235, Asp237, and Asp239 each coordinate Mg(2+). Position 96 is a phosphoserine (Ser96).

This sequence belongs to the phosphohexose mutase family. Mg(2+) serves as cofactor. In terms of processing, activated by phosphorylation.

The catalysed reaction is alpha-D-glucosamine 1-phosphate = D-glucosamine 6-phosphate. Functionally, catalyzes the conversion of glucosamine-6-phosphate to glucosamine-1-phosphate. This chain is Probable phosphoglucosamine mutase, found in Methanopyrus kandleri (strain AV19 / DSM 6324 / JCM 9639 / NBRC 100938).